A 253-amino-acid chain; its full sequence is Zinc import ATP-binding protein ZnuC (253 aa).

In terms of domain architecture, ABC transporter spans 6–227 (VTLNKISVTF…FGNRGAEQLA (222 aa)). 38–45 (GPNGAGKS) provides a ligand contact to ATP.

It belongs to the ABC transporter superfamily. Zinc importer (TC 3.A.1.15.5) family. In terms of assembly, the complex is composed of two ATP-binding proteins (ZnuC), two transmembrane proteins (ZnuB) and a solute-binding protein (ZnuA).

It localises to the cell inner membrane. It catalyses the reaction Zn(2+)(out) + ATP(in) + H2O(in) = Zn(2+)(in) + ADP(in) + phosphate(in) + H(+)(in). Functionally, part of the ABC transporter complex ZnuABC involved in zinc import. Responsible for energy coupling to the transport system. This is Zinc import ATP-binding protein ZnuC from Yersinia pestis bv. Antiqua (strain Antiqua).